We begin with the raw amino-acid sequence, 802 residues long: ATP-dependent RNA helicase dbp4 (802 aa).

Positions 1–24 (MAPINGSRNGKHSKPQRGGNLKRK) are disordered. Residues 9–24 (NGKHSKPQRGGNLKRK) show a composition bias toward basic residues. The Q motif motif lies at 47–75 (EQFTDLPLSEPTASGLASSHYKTLTDIQS). The 175-residue stretch at 78–252 (ISHALKGRDI…RLSLQDPEYV (175 aa)) folds into the Helicase ATP-binding domain. An ATP-binding site is contributed by 91 to 98 (AKTGSGKT). A DEAD box motif is present at residues 200 to 203 (DEAD). A Helicase C-terminal domain is found at 274–437 (PLPQKLDVLW…SIKDQLQNMC (164 aa)). 3 disordered regions span residues 494–538 (GDDT…KYDR), 589–614 (DKDLDVGGSSSEDEEDADGTEKKGAK), and 685–802 (LAEE…GLLG). Residues 520–538 (GEKKKTKKDETQVRTKYDR) are compositionally biased toward basic and acidic residues. Residues 685 to 704 (LAEEAERTRQADLEDKEVAK) are compositionally biased toward basic and acidic residues. Residues 705-714 (QKKREKKEKR) show a composition bias toward basic residues.

It belongs to the DEAD box helicase family. DDX10/DBP4 subfamily. Interacts with the U3 and U14 snoRNAs. Associates with pre-ribosomal complexes.

The protein localises to the nucleus. The protein resides in the nucleolus. The catalysed reaction is ATP + H2O = ADP + phosphate + H(+). Functionally, ATP-dependent RNA helicase required for ribosome biogenesis. Involved in the release of U14 snoRNA in pre-ribosomal complexes. Required for pre-rRNA cleavage at site A2. The protein is ATP-dependent RNA helicase dbp4 (dbp4) of Aspergillus niger (strain ATCC MYA-4892 / CBS 513.88 / FGSC A1513).